We begin with the raw amino-acid sequence, 415 residues long: Granaticin polyketide putative beta-ketoacyl synthase 2 (415 aa).

Residues 6 to 406 (RRRAVVTGLS…GFNSAVVVTL (401 aa)) form the Ketosynthase family 3 (KS3) domain.

Belongs to the thiolase-like superfamily. Beta-ketoacyl-ACP synthases family.

The protein operates within antibiotic biosynthesis; granaticin biosynthesis. This is Granaticin polyketide putative beta-ketoacyl synthase 2 (gra-orf2) from Streptomyces violaceoruber.